The chain runs to 61 residues: Large ribosomal subunit protein bL32 (61 aa).

Basic residues predominate over residues 1–16 (MAVPRRKTSPSRRGMR). The segment at 1–61 (MAVPRRKTSP…RQVLKVKKED (61 aa)) is disordered. Residues 17–44 (RSADALKKPTYVEDKDSGELRRPHHLDL) show a composition bias toward basic and acidic residues.

Belongs to the bacterial ribosomal protein bL32 family.

In Afipia carboxidovorans (strain ATCC 49405 / DSM 1227 / KCTC 32145 / OM5) (Oligotropha carboxidovorans), this protein is Large ribosomal subunit protein bL32.